Consider the following 468-residue polypeptide: 6-phospho-beta-galactosidase (468 aa).

D-galactose 6-phosphate contacts are provided by glutamine 19, histidine 116, asparagine 159, glutamate 160, and asparagine 297. Glutamate 160 acts as the Proton donor in catalysis. The active-site Nucleophile is the glutamate 375. Serine 428, tryptophan 429, lysine 435, and tyrosine 437 together coordinate D-galactose 6-phosphate.

This sequence belongs to the glycosyl hydrolase 1 family.

It carries out the reaction a 6-phospho-beta-D-galactoside + H2O = D-galactose 6-phosphate + an alcohol. Its pathway is carbohydrate metabolism; lactose degradation; D-galactose 6-phosphate and beta-D-glucose from lactose 6-phosphate: step 1/1. This chain is 6-phospho-beta-galactosidase, found in Lactococcus lactis subsp. lactis (Streptococcus lactis).